We begin with the raw amino-acid sequence, 556 residues long: Dihydroxy-acid dehydratase (556 aa).

D81 contacts Mg(2+). C122 serves as a coordination point for [2Fe-2S] cluster. Residues D123 and K124 each contribute to the Mg(2+) site. Residue K124 is modified to N6-carboxylysine. C196 contributes to the [2Fe-2S] cluster binding site. E444 lines the Mg(2+) pocket. S470 functions as the Proton acceptor in the catalytic mechanism.

Belongs to the IlvD/Edd family. Homodimer. It depends on [2Fe-2S] cluster as a cofactor. Requires Mg(2+) as cofactor.

It carries out the reaction (2R)-2,3-dihydroxy-3-methylbutanoate = 3-methyl-2-oxobutanoate + H2O. The enzyme catalyses (2R,3R)-2,3-dihydroxy-3-methylpentanoate = (S)-3-methyl-2-oxopentanoate + H2O. The protein operates within amino-acid biosynthesis; L-isoleucine biosynthesis; L-isoleucine from 2-oxobutanoate: step 3/4. Its pathway is amino-acid biosynthesis; L-valine biosynthesis; L-valine from pyruvate: step 3/4. Its function is as follows. Functions in the biosynthesis of branched-chain amino acids. Catalyzes the dehydration of (2R,3R)-2,3-dihydroxy-3-methylpentanoate (2,3-dihydroxy-3-methylvalerate) into 2-oxo-3-methylpentanoate (2-oxo-3-methylvalerate) and of (2R)-2,3-dihydroxy-3-methylbutanoate (2,3-dihydroxyisovalerate) into 2-oxo-3-methylbutanoate (2-oxoisovalerate), the penultimate precursor to L-isoleucine and L-valine, respectively. The protein is Dihydroxy-acid dehydratase of Syntrophotalea carbinolica (strain DSM 2380 / NBRC 103641 / GraBd1) (Pelobacter carbinolicus).